Consider the following 129-residue polypeptide: Small ribosomal subunit protein uS11 (129 aa).

Belongs to the universal ribosomal protein uS11 family. Part of the 30S ribosomal subunit. Interacts with proteins S7 and S18. Binds to IF-3.

In terms of biological role, located on the platform of the 30S subunit, it bridges several disparate RNA helices of the 16S rRNA. Forms part of the Shine-Dalgarno cleft in the 70S ribosome. This chain is Small ribosomal subunit protein uS11, found in Geobacillus stearothermophilus (Bacillus stearothermophilus).